The primary structure comprises 206 residues: 2,3-bisphosphoglycerate-dependent phosphoglycerate mutase (206 aa).

Substrate contacts are provided by residues 9 to 16 (RHGQSEWN), 22 to 23 (TG), arginine 61, 88 to 91 (ERDY), lysine 99, 115 to 116 (RR), and 159 to 160 (GN). The active-site Tele-phosphohistidine intermediate is the histidine 10. Residue glutamate 88 is the Proton donor/acceptor of the active site.

This sequence belongs to the phosphoglycerate mutase family. BPG-dependent PGAM subfamily. As to quaternary structure, homodimer.

It catalyses the reaction (2R)-2-phosphoglycerate = (2R)-3-phosphoglycerate. The protein operates within carbohydrate degradation; glycolysis; pyruvate from D-glyceraldehyde 3-phosphate: step 3/5. Its function is as follows. Catalyzes the interconversion of 2-phosphoglycerate and 3-phosphoglycerate. This chain is 2,3-bisphosphoglycerate-dependent phosphoglycerate mutase, found in Methylocella silvestris (strain DSM 15510 / CIP 108128 / LMG 27833 / NCIMB 13906 / BL2).